Reading from the N-terminus, the 629-residue chain is DNA mismatch repair protein MutL (629 aa).

The protein belongs to the DNA mismatch repair MutL/HexB family.

This protein is involved in the repair of mismatches in DNA. It is required for dam-dependent methyl-directed DNA mismatch repair. May act as a 'molecular matchmaker', a protein that promotes the formation of a stable complex between two or more DNA-binding proteins in an ATP-dependent manner without itself being part of a final effector complex. The sequence is that of DNA mismatch repair protein MutL from Rhodospirillum rubrum (strain ATCC 11170 / ATH 1.1.1 / DSM 467 / LMG 4362 / NCIMB 8255 / S1).